The sequence spans 333 residues: COMPASS-like H3K4 histone methylase component WDR5B (333 aa).

WD repeat units lie at residues 1-40 (MPSG…KTLE), 41-80 (GHTA…LIHR), 83-122 (GHSS…ECLK), 126-167 (GHTN…RMIK), 169-207 (HSMP…CLKT), 211-252 (DKSP…KVYT), 253-295 (GHTN…ILQR), and 298-333 (GHTD…KQDA).

As to quaternary structure, unlike WDR5A, does not interact with RBL or TRO.

This chain is COMPASS-like H3K4 histone methylase component WDR5B, found in Arabidopsis thaliana (Mouse-ear cress).